The primary structure comprises 439 residues: Elongation factor Tu, mitochondrial (439 aa).

The tr-type G domain occupies 51-246 (KPHVNIGTIG…AVDSYITLPE (196 aa)). The segment at 60–67 (GHVDHGKT) is G1. 60–67 (GHVDHGKT) contacts GTP. Residues 101-105 (GITIS) form a G2 region. The tract at residues 122–125 (DCPG) is G3. GTP is bound by residues 122-126 (DCPGH) and 177-180 (NKVD). The tract at residues 177–180 (NKVD) is G4. Positions 214–216 (SAL) are G5.

The protein belongs to the TRAFAC class translation factor GTPase superfamily. Classic translation factor GTPase family. EF-Tu/EF-1A subfamily.

Its subcellular location is the mitochondrion. Its function is as follows. This protein promotes the GTP-dependent binding of aminoacyl-tRNA to the A-site of ribosomes during protein biosynthesis. This Schizosaccharomyces pombe (strain 972 / ATCC 24843) (Fission yeast) protein is Elongation factor Tu, mitochondrial (tuf1).